The chain runs to 1254 residues: Structural polyprotein (1254 aa).

Positions 1 to 33 (MFPFQPMYPMQPMPYRNPFAAPRRPWFPRTDPF) are necessary for nucleocapsid assembly and virus assembly. The segment at 33–68 (FLAMQVQELTRSMANLTFKQRRDAPPEGPSAKKPKK) is host transcription inhibition. The short motif at 41–48 (LTRSMANL) is the Supraphysiological nuclear export signal element. Positions 45–119 (MANLTFKQRR…KKPGKRQRMV (75 aa)) are disordered. The Nuclear localization signal signature appears at 64–68 (KKPKK). A compositionally biased stretch (basic residues) spans 80–92 (GKKKKNQGKKKAK). The interval 91–127 (AKTGPPNPKAQNGNKKKTNKKPGKRQRMVMKLESDKT) is binding to the viral RNA. Phosphothreonine is present on residues Thr93 and Thr108. The span at 104 to 118 (NKKKTNKKPGKRQRM) shows a compositional bias: basic residues. The segment at 112-126 (PGKRQRMVMKLESDK) is ribosome-binding. The residue at position 124 (Ser124) is a Phosphoserine. One can recognise a Peptidase S3 domain in the interval 126–275 (KTFPIMLEGK…KYTPENCEQW (150 aa)). Position 127 is a phosphothreonine (Thr127). Catalysis depends on charge relay system residues His152, Asp174, and Ser226. Residues 276-287 (SLVTTMCLLANV) are functions as an uncleaved signal peptide for the precursor of protein E3/E2. Residues 276-701 (SLVTTMCLLA…HYYHRYPMST (426 aa)) lie on the Extracellular side of the membrane. N-linked (GlcNAc...) asparagine; by host glycosylation is found at Asn286, Asn546, and Asn652. A helical membrane pass occupies residues 702–722 (ILGLSICAAIATVSVAASTWL). Over 723-757 (FCRSRVACLTPYRLTPNARIPFCLAVLCCARTARA) the chain is Cytoplasmic. 3 S-palmitoyl cysteine; by host lipidation sites follow: Cys730, Cys750, and Cys751. The Extracellular portion of the chain corresponds to 758-772 (ETTWESLDHLWNNNQ). Residues 773–793 (QMFWIQLLIPLAALIVVTRLL) form a helical membrane-spanning segment. The Cytoplasmic segment spans residues 794–795 (RC). Residues 796 to 816 (VCCVVPFLVMAGAAAPAYEHA) traverse the membrane as a helical segment. Residues 817 to 1224 (TTMPSQAGIS…SKTAWTWLTS (408 aa)) lie on the Extracellular side of the membrane. 4 disulfide bridges follow: Cys861-Cys926, Cys874-Cys906, Cys875-Cys908, and Cys880-Cys890. The interval 896 to 913 (VYPFMWGGAYCFCDTENT) is E1 fusion peptide loop. N-linked (GlcNAc...) asparagine; by host glycosylation occurs at Asn946. 4 cysteine pairs are disulfide-bonded: Cys1071–Cys1083, Cys1113–Cys1188, Cys1118–Cys1192, and Cys1140–Cys1182. A helical membrane pass occupies residues 1225–1245 (LLGGSAVIIIIGLVLATIVAM). Over 1246 to 1254 (YVLTNQKHN) the chain is Cytoplasmic.

Homodimer. Homomultimer. Interacts with host karyopherin KPNA4; this interaction allows the nuclear import of the viral capsid protein. Interacts with spike glycoprotein E2. Interacts with host IRAK1; the interaction leads to inhibition of IRAK1-dependent signaling. Part of a tetrameric complex composed of host CRM1, host importin alpha/beta dimer and the viral capsid; this complex blocks the receptor-mediated transport through the nuclear pore. Interacts with host phosphatase PPP1CA; this interaction dephosphorylates the capsid protein, which increases its ability to bind to the viral genome. In terms of assembly, the precursor of protein E3/E2 and E1 form a heterodimer shortly after synthesis. As to quaternary structure, interacts with spike glycoprotein E2. The precursor of protein E3/E2 and E1 form a heterodimer shortly after synthesis. Processing of the precursor of protein E3/E2 into E2 and E3 results in a heterodimer of the spike glycoproteins E2 and E1. Spike at virion surface are constituted of three E2-E1 heterodimers. After target cell attachment and endocytosis, E1 change conformation to form homotrimers. Interacts with 6K protein. Interacts (via fusion peptide loop) with host LDLRAD3 (via domain LDL-receptor class A 1); this interaction mediates viral entry to the host cell. 2 adjacent E2-E1 heterodimers in the trimeric spike interact with host LDLRAD3. Interacts with spike glycoprotein E1. Processing of the precursor of protein E3/E2 into E2 and E3 results in a heterodimer of the spike glycoproteins E2 and E1. Spike at virion surface are constituted of a trimer of E2-E1 heterodimers. Interacts with 6K protein. Interacts with host LDLRAD3 (via domain LDL-receptor class A 1); this interaction mediates viral entry to the host cell. 2 adjacent E2-E1 heterodimers in the trimeric spike interact with host LDLRAD3. In terms of assembly, oligomer. Interacts with spike glycoprotein E1. Interacts with spike glycoprotein E2. In terms of processing, structural polyprotein: Specific enzymatic cleavages in vivo yield mature proteins. Capsid protein is auto-cleaved during polyprotein translation, unmasking a signal peptide at the N-terminus of the precursor of E3/E2. The remaining polyprotein is then targeted to the host endoplasmic reticulum, where host signal peptidase cleaves it into pE2, 6K and E1 proteins. pE2 is further processed to mature E3 and E2 by host furin in trans-Golgi vesicle. Post-translationally, phosphorylated on serine and threonine residues. Palmitoylated via thioester bonds. These palmitoylations may induce disruption of the C-terminus transmembrane. This would result in the reorientation of E2 C-terminus from lumenal to cytoplasmic side. In terms of processing, N-glycosylated. Post-translationally, palmitoylated via thioester bonds.

The protein resides in the virion. It localises to the host cytoplasm. The protein localises to the host cell membrane. Its subcellular location is the host nucleus. It is found in the virion membrane. It carries out the reaction Autocatalytic release of the core protein from the N-terminus of the togavirus structural polyprotein by hydrolysis of a -Trp-|-Ser- bond.. Its function is as follows. Forms an icosahedral capsid with a T=4 symmetry composed of 240 copies of the capsid protein surrounded by a lipid membrane through which penetrate 80 spikes composed of trimers of E1-E2 heterodimers. The capsid protein binds to the viral RNA genome at a site adjacent to a ribosome binding site for viral genome translation following genome release. Possesses a protease activity that results in its autocatalytic cleavage from the nascent structural protein. Following its self-cleavage, the capsid protein transiently associates with ribosomes, and within several minutes the protein binds to viral RNA and rapidly assembles into icosahedric core particles. The resulting nucleocapsid eventually associates with the cytoplasmic domain of the spike glycoprotein E2 at the cell membrane, leading to budding and formation of mature virions. In case of infection, new virions attach to target cells and after clathrin-mediated endocytosis their membrane fuses with the host endosomal membrane. This leads to the release of the nucleocapsid into the cytoplasm, followed by an uncoating event necessary for the genomic RNA to become accessible. The uncoating might be triggered by the interaction of capsid proteins with ribosomes. Binding of ribosomes would release the genomic RNA since the same region is genomic RNA-binding and ribosome-binding. Specifically inhibits interleukin-1 receptor-associated kinase 1/IRAK1-dependent signaling during viral entry, representing a means by which the alphaviruses may evade innate immune detection and activation prior to viral gene expression. Inhibits host transcription. Forms a tetrameric complex with XPO1/CRM1 and the nuclear import receptor importin. This complex blocks the central channel of host nuclear pores thereby inhibiting the receptor-mediated nuclear transport and thus the host mRNA and rRNA transcription. The inhibition of transcription is linked to a cytopathic effect on the host cell. In terms of biological role, provides the signal sequence for the translocation of the precursor of protein E3/E2 to the host endoplasmic reticulum. Furin-cleaved E3 remains associated with spike glycoprotein E1 and mediates pH protection of the latter during the transport via the secretory pathway. After virion release from the host cell, the assembly protein E3 is gradually released in the extracellular space. Plays a role in viral attachment to target host cell, by binding to the cell receptor LDLRAD3. Synthesized as a p62 precursor which is processed by furin at the cell membrane just before virion budding, giving rise to E2-E1 heterodimer. The p62-E1 heterodimer is stable, whereas E2-E1 is unstable and dissociate at low pH. p62 is processed at the last step, presumably to avoid E1 fusion activation before its final export to cell surface. E2 C-terminus contains a transitory transmembrane that would be disrupted by palmitoylation, resulting in reorientation of the C-terminal tail from lumenal to cytoplasmic side. This step is critical since E2 C-terminus is involved in budding by interacting with capsid proteins. This release of E2 C-terminus in cytoplasm occurs lately in protein export, and precludes premature assembly of particles at the endoplasmic reticulum membrane. Functionally, acts as a viroporin that participates in virus glycoprotein processing and transport to the plasma membrane, cell permeabilization and budding of viral particles. Disrupts the calcium homeostasis of the cell, probably at the endoplasmic reticulum level. This leads to cytoplasmic calcium elevation. Because of its lipophilic properties, the 6K protein is postulated to influence the selection of lipids that interact with the transmembrane domains of the glycoproteins, which, in turn, affects the deformability of the bilayer required for the extreme curvature that occurs as budding proceeds. Present in low amount in virions, about 3% compared to viral glycoproteins. Its function is as follows. Class II viral fusion protein. Fusion activity is inactive as long as E1 is bound to E2 in mature virion. After virus attachment to cell receptor LDLRAD3 and endocytosis, acidification of the endosome induce dissociation of E1/E2 heterodimer and concomitant trimerization of the E1 subunits. This E1 trimer is fusion active, and promotes release of viral nucleocapsid in cytoplasm after endosome and viral membrane fusion. Efficient fusion requires the presence of cholesterol and sphingolipid in the target membrane. The polypeptide is Structural polyprotein (Bos taurus (Bovine)).